We begin with the raw amino-acid sequence, 133 residues long: UPF0102 protein Anae109_1947 (133 aa).

Belongs to the UPF0102 family.

This chain is UPF0102 protein Anae109_1947, found in Anaeromyxobacter sp. (strain Fw109-5).